The following is a 526-amino-acid chain: Thioredoxin reductase 2, mitochondrial (526 aa).

Residues 1 to 36 constitute a mitochondrion transit peptide; that stretch reads MAAIVAALRGSSGRFRPQTRVLTRGTRGAAGAASAA. 43 to 72 provides a ligand contact to FAD; that stretch reads DLLVIGGGSGGLACAKEAAQLGRKVAVADY. Lysine 81 carries the N6-succinyllysine modification. Cysteine 88 and cysteine 93 form a disulfide bridge. 2 positions are modified to N6-succinyllysine: lysine 177 and lysine 331. Catalysis depends on histidine 499, which acts as the Proton acceptor. Positions 524-525 form a cross-link, cysteinyl-selenocysteine (Cys-Sec); sequence CU. Position 525 (selenocysteine 525) is a non-standard amino acid, selenocysteine.

The protein belongs to the class-I pyridine nucleotide-disulfide oxidoreductase family. In terms of assembly, homodimer. It depends on FAD as a cofactor. In terms of tissue distribution, expressed in liver, kidney, adrenal gland and heart.

It is found in the mitochondrion. The catalysed reaction is [thioredoxin]-dithiol + NADP(+) = [thioredoxin]-disulfide + NADPH + H(+). Functionally, involved in the control of reactive oxygen species levels and the regulation of mitochondrial redox homeostasis. Maintains mitochondrial thioredoxin in a reduced state. May play a role in redox-regulated cell signaling. The protein is Thioredoxin reductase 2, mitochondrial (Txnrd2) of Rattus norvegicus (Rat).